Reading from the N-terminus, the 351-residue chain is D-alanine--D-alanine ligase (351 aa).

The region spanning 141 to 349 (KAAFSAAGLP…ISQLVARLIE (209 aa)) is the ATP-grasp domain. 176–231 (ETQLGYPCFIKPANLGSSVGISKAYDKKELLNGLDLAAQLDSRIVVEKNIKARELE) contributes to the ATP binding site. Mg(2+)-binding residues include aspartate 302, glutamate 316, and asparagine 318.

This sequence belongs to the D-alanine--D-alanine ligase family. Mg(2+) is required as a cofactor. Requires Mn(2+) as cofactor.

The protein resides in the cytoplasm. It catalyses the reaction 2 D-alanine + ATP = D-alanyl-D-alanine + ADP + phosphate + H(+). It functions in the pathway cell wall biogenesis; peptidoglycan biosynthesis. Cell wall formation. This chain is D-alanine--D-alanine ligase, found in Prochlorococcus marinus (strain SARG / CCMP1375 / SS120).